A 119-amino-acid polypeptide reads, in one-letter code: Large ribosomal subunit protein uL18 (119 aa).

Residues 1 to 20 (MSQIDKAARRQKIKARSRAT) form a disordered region. Residues 9 to 19 (RRQKIKARSRA) show a composition bias toward basic residues.

This sequence belongs to the universal ribosomal protein uL18 family. In terms of assembly, part of the 50S ribosomal subunit; part of the 5S rRNA/L5/L18/L25 subcomplex. Contacts the 5S and 23S rRNAs.

Its function is as follows. This is one of the proteins that bind and probably mediate the attachment of the 5S RNA into the large ribosomal subunit, where it forms part of the central protuberance. The protein is Large ribosomal subunit protein uL18 of Chlorobaculum parvum (strain DSM 263 / NCIMB 8327) (Chlorobium vibrioforme subsp. thiosulfatophilum).